The primary structure comprises 610 residues: UvrABC system protein C (610 aa).

A GIY-YIG domain is found at 16–94 (SQPGVYRMYD…IKLYQPRYNV (79 aa)). One can recognise a UVR domain in the interval 204 to 239 (DQVLTQLIARMEKASQSLEFEEAARIRDQIQAVRRV). Residues 540-559 (HAISGHRKKRAKVKSTSSLE) form a disordered region. Basic residues predominate over residues 543 to 552 (SGHRKKRAKV).

It belongs to the UvrC family. In terms of assembly, interacts with UvrB in an incision complex.

The protein localises to the cytoplasm. Its function is as follows. The UvrABC repair system catalyzes the recognition and processing of DNA lesions. UvrC both incises the 5' and 3' sides of the lesion. The N-terminal half is responsible for the 3' incision and the C-terminal half is responsible for the 5' incision. This is UvrABC system protein C from Klebsiella pneumoniae (strain 342).